The primary structure comprises 529 residues: Bifunctional purine biosynthesis protein PurH (529 aa).

Positions 1–148 (MQQRRPVRRA…KNHKDVAIVV (148 aa)) constitute an MGS-like domain.

This sequence belongs to the PurH family.

It catalyses the reaction (6R)-10-formyltetrahydrofolate + 5-amino-1-(5-phospho-beta-D-ribosyl)imidazole-4-carboxamide = 5-formamido-1-(5-phospho-D-ribosyl)imidazole-4-carboxamide + (6S)-5,6,7,8-tetrahydrofolate. It carries out the reaction IMP + H2O = 5-formamido-1-(5-phospho-D-ribosyl)imidazole-4-carboxamide. It participates in purine metabolism; IMP biosynthesis via de novo pathway; 5-formamido-1-(5-phospho-D-ribosyl)imidazole-4-carboxamide from 5-amino-1-(5-phospho-D-ribosyl)imidazole-4-carboxamide (10-formyl THF route): step 1/1. It functions in the pathway purine metabolism; IMP biosynthesis via de novo pathway; IMP from 5-formamido-1-(5-phospho-D-ribosyl)imidazole-4-carboxamide: step 1/1. This is Bifunctional purine biosynthesis protein PurH from Citrobacter koseri (strain ATCC BAA-895 / CDC 4225-83 / SGSC4696).